Here is a 172-residue protein sequence, read N- to C-terminus: Large ribosomal subunit protein uL10 (172 aa).

It belongs to the universal ribosomal protein uL10 family. As to quaternary structure, part of the ribosomal stalk of the 50S ribosomal subunit. The N-terminus interacts with L11 and the large rRNA to form the base of the stalk. The C-terminus forms an elongated spine to which L12 dimers bind in a sequential fashion forming a multimeric L10(L12)X complex.

Its function is as follows. Forms part of the ribosomal stalk, playing a central role in the interaction of the ribosome with GTP-bound translation factors. The sequence is that of Large ribosomal subunit protein uL10 from Afipia carboxidovorans (strain ATCC 49405 / DSM 1227 / KCTC 32145 / OM5) (Oligotropha carboxidovorans).